The primary structure comprises 830 residues: Post-transcriptional regulator MKT1 (830 aa).

K4 is covalently cross-linked (Glycyl lysine isopeptide (Lys-Gly) (interchain with G-Cter in ubiquitin)). Positions 130–380 are interaction with PBP1; sequence RSRGWTQWNN…SPATTVTKNA (251 aa). The segment at 347 to 400 is disordered; it reads DSEKNNKDGKKSNLSSPSSASSSASPATTVTKNASEKLTYEKSSTKEVRKPRDI. S358, S362, and S371 each carry phosphoserine. The span at 361 to 373 shows a compositional bias: low complexity; sequence SSPSSASSSASPA. The span at 380–400 shows a compositional bias: basic and acidic residues; it reads ASEKLTYEKSSTKEVRKPRDI.

Belongs to the XPG/RAD2 endonuclease family. Interacts (via C-terminus) with PBP1 (via C-terminus).

Its subcellular location is the cytoplasm. The protein localises to the cytosol. Its function is as follows. Involved in 3'-UTR mediated RNA regulation. Binds to RNA-binding and RNA regulatory proteins. Complexes with PAB1-binding protein to promote mRNA interactions with poly(A)-binding protein. Promotes mating-type switching in mother cells by positively regulating HO expression. In Saccharomyces cerevisiae (strain ATCC 204508 / S288c) (Baker's yeast), this protein is Post-transcriptional regulator MKT1 (MKT1).